A 1388-amino-acid chain; its full sequence is Collagen alpha-1(XV) chain (1388 aa).

The first 27 residues, 1-27, serve as a signal peptide directing secretion; it reads MAPRRNNGQCWCLLMLLSVSTPLPAVT. The Laminin G-like domain maps to 66–249; that stretch reads AYSFGPGANV…SSASGETSGL (184 aa). The tract at residues 223-250 is disordered; that stretch reads TVHPDPRTPEELCDPEESSASGETSGLQ. The segment at 229 to 555 is nonhelical region 1 (NC1); it reads RTPEELCDPE…WITPAQREHV (327 aa). Over residues 240–249 the composition is skewed to polar residues; it reads SSASGETSGL. Ser243 and Ser247 each carry an O-linked (Xyl...) (chondroitin sulfate) serine glycan. Residue Thr265 is glycosylated (O-linked (GalNAc...) threonine). A disordered region spans residues 266–301; that stretch reads QASPKEAKVEPINTPPTPSSPFEDMELSGEPVPEGT. Residues Asn306 and Asn324 are each glycosylated (N-linked (GlcNAc...) asparagine). O-linked (Xyl...) (chondroitin sulfate) serine glycosylation is present at Ser343. A run of 4 repeats spans residues 358–408, 409–459, 460–509, and 510–555. Residues 358 to 555 form a 4 X tandem repeats region; that stretch reads AATAAGLAEV…WITPAQREHV (198 aa). Positions 371-795 are disordered; that stretch reads TAGEAEASSV…VGPPGPRGPP (425 aa). Residues 379-392 are compositionally biased toward polar residues; it reads SVPTGGPTLSMSTE. Positions 409-420 are enriched in low complexity; the sequence is AATAAGEAEALA. The segment covering 452-472 has biased composition (polar residues); the sequence is GPSSEDSLTTAAAATEVSLST. Residues 510–527 show a composition bias toward low complexity; it reads AAATTEEPLITAGGEESG. Residues 528–540 are compositionally biased toward pro residues; that stretch reads SPPPDGPPLPLPT. The segment at 556-573 is triple-helical region 1 (COL1); the sequence is GMKGQAGPKGEKGDAGEE. A nonhelical region 2 (NC2) region spans residues 574–618; the sequence is LPGPPEPSGPVGPTAGAEAEGSGLGWGSDVGSGSGDLVGSEQLLR. Residues 595–609 are compositionally biased toward gly residues; the sequence is SGLGWGSDVGSGSGD. Collagen-like domains follow at residues 619 to 680 and 681 to 731; these read GPPG…MKGE and KGAR…PPGP. Residues 619–732 form a triple-helical region 2 (COL2) region; the sequence is GPPGPPGPPG…PGPPGPPGPG (114 aa). A compositionally biased stretch (pro residues) spans 620 to 630; that stretch reads PPGPPGPPGLP. A glycan (N-linked (GlcNAc...) asparagine) is linked at Asn687. Pro residues predominate over residues 716 to 731; sequence VMGPPGPPGPPGPPGP. A nonhelical region 3 (NC3) region spans residues 733–763; sequence CTMGLGFEDTEGSGSTQLLNEPKLSRPTAAI. Ser745 carries an O-linked (Xyl...) (chondroitin sulfate) serine glycan. Positions 764-798 are triple-helical region 3 (COL3); it reads GLKGEKGDRGPKGERGMDGASIVGPPGPRGPPGHI. Basic and acidic residues predominate over residues 766–780; that stretch reads KGEKGDRGPKGERGM. The interval 799–822 is nonhelical region 4 (NC4); it reads KVLSNSLINITHGFMNFSDIPELV. 2 N-linked (GlcNAc...) asparagine glycosylation sites follow: Asn807 and Asn814. The region spanning 823 to 865 is the Collagen-like 3 domain; it reads GPPGPDGLPGLPGFPGPRGPKGDTGLPGFPGLKGEQGEKGEPG. A triple-helical region 4 (COL4) region spans residues 823–867; the sequence is GPPGPDGLPGLPGFPGPRGPKGDTGLPGFPGLKGEQGEKGEPGAI. Positions 827–840 are enriched in pro residues; sequence PDGLPGLPGFPGPR. Residues 827 to 864 are disordered; sequence PDGLPGLPGFPGPRGPKGDTGLPGFPGLKGEQGEKGEP. The interval 868-878 is nonhelical region 5 (NC5); sequence LTEDIPLERLM. One can recognise a Collagen-like 4 domain in the interval 879 to 927; the sequence is GKKGEPGMHGAPGPMGPKGPPGHKGEFGLPGRPGRPGLNGLKGTKGDPG. The tract at residues 879–949 is triple-helical region 5 (COL5); that stretch reads GKKGEPGMHG…PGPPGPPGAV (71 aa). Residues 950–983 form a nonhelical region 6 (NC6) region; it reads INIKGAIFPIPVRPHCKMPVDTAHPGSPELITFH. The interval 984-1013 is triple-helical region 6 (COL6); the sequence is GVKGEKGSWGLPGSKGEKGDQGAQGPPGPP. Disordered regions lie at residues 988–1016 and 1029–1133; these read EKGSWGLPGSKGEKGDQGAQGPPGPPLDL and ENGD…GSRN. A nonhelical region 7 (NC7) region spans residues 1014 to 1027; sequence LDLAYLRHFLNNLK. The triple-helical region 7 (COL7) stretch occupies residues 1028 to 1045; sequence GENGDKGFKGEKGEKGDI. Basic and acidic residues predominate over residues 1029–1044; it reads ENGDKGFKGEKGEKGD. Asn1046 is a glycosylation site (N-linked (GlcNAc...) asparagine). A nonhelical region 8 (NC8) region spans residues 1046-1052; it reads NGSFLMS. A triple-helical region 8 (COL8) region spans residues 1053-1107; sequence GPPGLPGNPGPAGQKGETVVGPQGPPGAPGLPGPPGFGRPGDPGPPGPPGPPGPP. 2 stretches are compositionally biased toward pro residues: residues 1075–1107 and 1117–1126; these read QGPPGAPGLPGPPGFGRPGDPGPPGPPGPPGPP and PGPPGPPGQP. The segment at 1108–1117 is nonhelical region 9 (NC9); that stretch reads AILGAAVALP. Residues 1118 to 1132 form a triple-helical region 9 (COL9) region; it reads GPPGPPGQPGLPGSR. The segment at 1133–1388 is nonhelical region 10 (NC10); that stretch reads NLVTAFSNMD…ENSFMTDARK (256 aa). 2 cysteine pairs are disulfide-bonded: Cys1237-Cys1377 and Cys1339-Cys1369.

It belongs to the multiplexin collagen family. As to quaternary structure, trimer; disulfide-linked. Interacts moderately with EFEMP2. Prolines at the third position of the tripeptide repeating unit (G-X-Y) are hydroxylated in some or all of the chains. In terms of processing, O-glycosylated; with core 1 or possibly core 8 glycans. Contains chondroitin sulfate. As to expression, detected in fibroblasts and urine (at protein level). Detected in placenta (at protein level). Expressed predominantly in internal organs such as adrenal gland, pancreas and kidney.

It is found in the secreted. The protein resides in the extracellular space. Its subcellular location is the extracellular matrix. Functionally, structural protein that stabilizes microvessels and muscle cells, both in heart and in skeletal muscle. In terms of biological role, restin potently inhibits angiogenesis. The chain is Collagen alpha-1(XV) chain (COL15A1) from Homo sapiens (Human).